The following is a 185-amino-acid chain: Lipid A acyltransferase PagP (185 aa).

Residues 1–24 (MKTHNDILAALAALPLFLTGAAFA) form the signal peptide. Catalysis depends on residues His-57, Asp-100, and Ser-101.

It belongs to the lipid A palmitoyltransferase family. As to quaternary structure, homodimer.

The protein localises to the cell outer membrane. It carries out the reaction a lipid A + a 1,2-diacyl-sn-glycero-3-phosphocholine = a hepta-acyl lipid A + a 2-acyl-sn-glycero-3-phosphocholine. The enzyme catalyses a lipid IVA + a 1,2-diacyl-sn-glycero-3-phosphocholine = a lipid IVB + a 2-acyl-sn-glycero-3-phosphocholine. It catalyses the reaction a lipid IIA + a 1,2-diacyl-sn-glycero-3-phosphocholine = a lipid IIB + a 2-acyl-sn-glycero-3-phosphocholine. Transfers a fatty acid residue from the sn-1 position of a phospholipid to the N-linked hydroxyfatty acid chain on the proximal unit of lipid A or its precursors. This chain is Lipid A acyltransferase PagP, found in Edwardsiella tarda (strain FL6-60).